The chain runs to 459 residues: Septin-4 (459 aa).

Ser10, Ser49, Ser98, and Ser99 each carry phosphoserine. 2 disordered regions span residues 18-52 (FVKD…SPDL) and 70-98 (SQQY…PYDS). The 274-residue stretch at 122 to 395 (KGFDFTLMVA…ENYRAQCIQS (274 aa)) folds into the Septin-type G domain. Residues 132-139 (GESGLGKS) form a G1 motif region. GTP is bound by residues 132-139 (GESGLGKS) and Thr166. The interval 189 to 192 (DTPG) is G3 motif. The interval 270-273 (AKAD) is G4 motif. 271–279 (KADTLTPSE) serves as a coordination point for GTP. Residue Ser306 is modified to Phosphoserine. GTP contacts are provided by Gly329 and Arg344. Residues 410–430 (TRESGTDFPIPAVPPGTDPET) are disordered. The residue at position 413 (Ser413) is a Phosphoserine. Thr415 carries the post-translational modification Phosphothreonine. Residues 434–459 (IREKDEELRRMQEMLHKIQRQMKETH) are a coiled coil.

Belongs to the TRAFAC class TrmE-Era-EngA-EngB-Septin-like GTPase superfamily. Septin GTPase family. As to quaternary structure, septins polymerize into heterooligomeric protein complexes that form filaments, and can associate with cellular membranes, actin filaments and microtubules. GTPase activity is required for filament formation. Interacts with SEPTIN8. Component of a septin core octameric complex consisting of SEPTIN12, SEPTIN7, SEPTIN6 and SEPTIN2 or SEPTIN4 in the order 12-7-6-2-2-6-7-12 or 12-7-6-4-4-6-7-12. Interacts with SEPTIN14 (via C-terminus). Interacts with DYRK1A. Interacts with SLC6A3/DAT and SNCA/alpha-synuclein. Interacts with STX1A; in the striatum. Interacts with XIAP (via BIR3 domain) following the induction of apoptosis. Interacts with AREL1 (via HECT domain); in the cytoplasm following induction of apoptosis. In terms of processing, phosphorylated by DYRK1A.

Its subcellular location is the cytoplasm. The protein resides in the cell projection. It is found in the cilium. The protein localises to the flagellum. It localises to the cytoplasmic vesicle. Its subcellular location is the secretory vesicle. The protein resides in the axon. It is found in the dendrite. The protein localises to the perikaryon. Its function is as follows. Filament-forming cytoskeletal GTPase. Pro-apoptotic protein involved in LGR5-positive intestinal stem cell and Paneth cell expansion in the intestines, via its interaction with XIAP. May also play a role in the regulation of cell fate in the intestine. Positive regulator of apoptosis involved in hematopoietic stem cell homeostasis; via its interaction with XIAP. Negative regulator of repair and hair follicle regeneration in response to injury, due to inhibition of hair follicle stem cell proliferation, potentially via its interaction with XIAP. Plays an important role in male fertility and sperm motility. During spermiogenesis, essential for the establishment of the annulus (a fibrous ring structure connecting the midpiece and the principal piece of the sperm flagellum) which is a requisite for the structural and mechanical integrity of the sperm. Involved in the migration of cortical neurons and the formation of neuron leading processes during embryonic development. Required for dopaminergic metabolism in presynaptic autoreceptors; potentially via activity as a presynaptic scaffold protein. This Rattus norvegicus (Rat) protein is Septin-4.